The primary structure comprises 306 residues: MAVDSKIVVSCTSRLFTDEVCKLQEKVGCIVPLRDSHGSQNLQTVGLKPALGIDLGSDYVLMCNYLSTCTLAILEEVTTDSLVLTKISRNGTYQIKNKYHPFFQWDSNIQVCVMPPLFDQESNSVDLQSNNFTLLLPIVVPCEVAHEALQKVLTYNIYLRVTQAEPNAARMADVLAQTNYVTYLGNHYSLNLEGMESLGALAFLDNLATYLCIMVGLLPRACVRLLTTLLRHGENELLNVFRRMIPDEFNAAAANLNADTVYPDMTKIGLLITYLQTLGSIFNLSPRLQVSTYTPENLSATCWYVC.

The protein belongs to the herpesviridae TRX2 protein family. As to quaternary structure, interacts with TRX1 and major capisd protein/MCP.

It localises to the virion. The protein localises to the host nucleus. In terms of biological role, structural component of the T=16 icosahedral capsid. The capsid is composed of pentamers and hexamers of major capsid protein/MCP, which are linked together by heterotrimers called triplexes. These triplexes are formed by a single molecule of triplex protein 1/TRX1 and two copies of triplex protein 2/TRX2. Additionally, TRX1 is required for efficient transport of TRX2 to the nucleus, which is the site of capsid assembly. The chain is Triplex capsid protein 2 from Alcelaphine herpesvirus 1 (strain C500) (AlHV-1).